The sequence spans 141 residues: Large ribosomal subunit protein uL16 (141 aa).

The segment at 1–20 (MLMPKRTKYRKQQKGRNRGK) is disordered.

This sequence belongs to the universal ribosomal protein uL16 family. Part of the 50S ribosomal subunit.

Functionally, binds 23S rRNA and is also seen to make contacts with the A and possibly P site tRNAs. In Nautilia profundicola (strain ATCC BAA-1463 / DSM 18972 / AmH), this protein is Large ribosomal subunit protein uL16.